A 133-amino-acid chain; its full sequence is Protransforming growth factor alpha (133 aa).

The first 23 residues, 1 to 23 (MVPSAGQLALFALGIFLAVCQAL), serve as a signal peptide directing secretion. A propeptide spans 24–38 (ENSTSALSDPPVAAA) (removed in mature form). Residues 24-97 (ENSTSALSDP…AVVAASQKKQ (74 aa)) lie on the Extracellular side of the membrane. Asn25 is a glycosylation site (N-linked (GlcNAc...) asparagine). One can recognise an EGF-like domain in the interval 42 to 82 (HFNDCPDSHTQFCFHGTCRFLLQEEKPACVCHSGYVGARCE). Intrachain disulfides connect Cys46–Cys59, Cys54–Cys70, and Cys72–Cys81. The propeptide at 89–133 (VVAASQKKQAITALVVVTIVALAVLIITCVLIHCCEVRKHSVVVP) is removed in mature form. Residues 98–120 (AITALVVVTIVALAVLIITCVLI) form a helical membrane-spanning segment. Topologically, residues 121–133 (HCCEVRKHSVVVP) are cytoplasmic.

As to quaternary structure, interacts with the PDZ domains of MAGI3, SDCBP and SNTA1. The interaction with SDCBP, is required for the targeting to the cell surface. In the endoplasmic reticulum, in its immature form (i.e. with a prosegment and lacking full N-glycosylation), interacts with CNIH. In the Golgi apparatus, may form a complex with CNIH and GORASP2. Interacts (via cytoplasmic C-terminal domain) with NKD2. Skin.

It localises to the secreted. It is found in the extracellular space. The protein resides in the cell membrane. In terms of biological role, TGF alpha is a mitogenic polypeptide that is able to bind to the EGF receptor/EGFR and to act synergistically with TGF beta to promote anchorage-independent cell proliferation in soft agar. The protein is Protransforming growth factor alpha (TGFA) of Ovis aries (Sheep).